The following is a 1033-amino-acid chain: Immunoglobulin superfamily member 2 (1033 aa).

The N-terminal stretch at Met-1–Gly-20 is a signal peptide. Residues Gln-21–Pro-970 are Extracellular-facing. 7 Ig-like C2-type domains span residues Arg-22–Thr-141, Pro-144–Thr-266, Pro-279–Gly-388, Pro-408–Ser-529, Leu-539–Ser-657, Pro-670–Ser-797, and Pro-806–Asn-941. Cys-43 and Cys-121 are joined by a disulfide. The N-linked (GlcNAc...) asparagine glycan is linked to Asn-139. A disulfide bond links Cys-168 and Cys-249. The EWI motif signature appears at Glu-253 to Ile-255. 3 cysteine pairs are disulfide-bonded: Cys-304/Cys-377, Cys-432/Cys-509, and Cys-560/Cys-638. Asn-677 is a glycosylation site (N-linked (GlcNAc...) asparagine). Intrachain disulfides connect Cys-695–Cys-776 and Cys-832–Cys-925. A helical transmembrane segment spans residues Leu-971 to Leu-991. At Cys-992–Tyr-1033 the chain is on the cytoplasmic side.

In terms of processing, N-glycosylated.

The protein resides in the membrane. Plays a role as inhibitor of T-cells proliferation induced by CD3. Inhibits expression of IL2RA on activated T-cells and secretion of IL2. Inhibits tyrosine kinases that are required for IL2 production and cellular proliferation. Inhibits phospholipase C-gamma-1/PLCG1 phosphorylation and subsequent CD3-induced changes in intracellular free calcium. Prevents nuclear translocation of nuclear factor of activated T-cell to the nucleus. Plays a role in the inhibition of T-cell proliferation via IL10 secretion by cutaneous dendritic cells. This Mus musculus (Mouse) protein is Immunoglobulin superfamily member 2 (Cd101).